A 168-amino-acid chain; its full sequence is Short form salivary protein D7R2 (168 aa).

The N-terminal stretch at 1–21 (MFKKLLLSVGLVWCLISLGQA) is a signal peptide. Cystine bridges form between cysteine 30–cysteine 62, cysteine 43–cysteine 168, and cysteine 101–cysteine 120. The noradrenaline site is built by glutamate 31 and arginine 46. Glutamate 31 is a serotonin binding site. Residues histidine 59, tyrosine 118, aspartate 135, and glutamate 138 each coordinate serotonin. The histamine site is built by tyrosine 118, aspartate 135, and glutamate 138. Noradrenaline is bound by residues aspartate 135 and glutamate 138.

It belongs to the PBP/GOBP family. Female saliva (at protein level). Female salivary gland. Not detected in female carcass without salivary glands. Not detected in male tissues.

Its subcellular location is the secreted. Functionally, modulates blood feeding of female mosquitoes on vertebrate species by binding and sequestering different mediators involved in the host response. Binds serotonin, noradrenaline, histamine and adrenaline. Inhibits histamine-, serotonin- and noradrenaline-induced smooth muscle contraction. Exhibits vasodilating activity. This is Short form salivary protein D7R2 from Anopheles gambiae (African malaria mosquito).